Consider the following 193-residue polypeptide: Ribonuclease HII (193 aa).

One can recognise an RNase H type-2 domain in the interval 1–193; it reads MTLGIDEAGR…SFALKNNWFS (193 aa). 3 residues coordinate a divalent metal cation: Asp-6, Glu-7, and Asp-103.

This sequence belongs to the RNase HII family. The cofactor is Mn(2+). It depends on Mg(2+) as a cofactor.

The protein localises to the cytoplasm. The enzyme catalyses Endonucleolytic cleavage to 5'-phosphomonoester.. Endonuclease that specifically degrades the RNA of RNA-DNA hybrids. The protein is Ribonuclease HII of Helicobacter acinonychis (strain Sheeba).